The primary structure comprises 197 residues: Class A basic helix-loop-helix protein 15 (197 aa).

Positions 1–12 (MKTKNRPPRRRT) are enriched in basic residues. 2 disordered regions span residues 1–82 (MKTK…ERER) and 178–197 (QPQGHLQRYSTQIHSFREGS). Thr-12 and Thr-25 each carry phosphothreonine. A compositionally biased stretch (basic and acidic residues) spans 65 to 82 (GRRENSVQRRLESNERER). The bHLH domain occupies 72-124 (QRRLESNERERQRMHKLNNAFQALREVIPHVRADKKLSKIETLTLAKNYIKSL).

Forms homodimers or heterodimers with TCF3 gene products E12 and E47. These dimers bind to the E-box site, however, heterodimer with MYOD1 does not bind target DNA. Expressed in pancreatic tissue only in acinar cells. There is a complete absence of expression in intra- or interlobular pancreatic ducts and in all islet cells.

It is found in the nucleus. Its function is as follows. Plays a role in controlling the transcriptional activity of MyoD, ensuring that expanding myoblast populations remain undifferentiated. Repression may occur through muscle-specific E-box occupancy by homodimers. May also negatively regulate bHLH-mediated transcription through an N-terminal repressor domain. Serves as a key regulator of acinar cell function, stability, and identity. Also required for normal organelle localization in exocrine cells and for mitochondrial calcium ion transport. May function as a unique regulator of gene expression in several different embryonic and postnatal cell lineages. Binds to the E-box consensus sequence 5'-CANNTG-3'. In Mus musculus (Mouse), this protein is Class A basic helix-loop-helix protein 15 (Bhlha15).